The chain runs to 259 residues: uncharacterized protein (259 aa).

Glu46 is a catalytic residue.

The protein belongs to the PhzF family.

This is an uncharacterized protein from Pseudomonas aeruginosa (strain ATCC 15692 / DSM 22644 / CIP 104116 / JCM 14847 / LMG 12228 / 1C / PRS 101 / PAO1).